Reading from the N-terminus, the 948-residue chain is Isoleucine--tRNA ligase (948 aa).

Positions 58 to 68 (PYANGSIHIGH) match the 'HIGH' region motif. Position 572 (Glu-572) interacts with L-isoleucyl-5'-AMP. The 'KMSKS' region motif lies at 613 to 617 (KMSKS). Lys-616 is an ATP binding site. 4 residues coordinate Zn(2+): Cys-911, Cys-914, Cys-931, and Cys-934.

Belongs to the class-I aminoacyl-tRNA synthetase family. IleS type 1 subfamily. As to quaternary structure, monomer. Zn(2+) is required as a cofactor.

It localises to the cytoplasm. It carries out the reaction tRNA(Ile) + L-isoleucine + ATP = L-isoleucyl-tRNA(Ile) + AMP + diphosphate. Functionally, catalyzes the attachment of isoleucine to tRNA(Ile). As IleRS can inadvertently accommodate and process structurally similar amino acids such as valine, to avoid such errors it has two additional distinct tRNA(Ile)-dependent editing activities. One activity is designated as 'pretransfer' editing and involves the hydrolysis of activated Val-AMP. The other activity is designated 'posttransfer' editing and involves deacylation of mischarged Val-tRNA(Ile). This Edwardsiella ictaluri (strain 93-146) protein is Isoleucine--tRNA ligase.